A 370-amino-acid polypeptide reads, in one-letter code: Glucan endo-1,3-beta-glucosidase, basic vacuolar isoform GLB (370 aa).

An N-terminal signal peptide occupies residues 1–32 (MSTSDKHNTPQMAAITLLGLLLVASTIEIAGA). The residue at position 33 (glutamine 33) is a Pyrrolidone carboxylic acid. The active-site Proton donor is the glutamate 128. Catalysis depends on glutamate 273, which acts as the Nucleophile. A propeptide spans 349–370 (VSGGVWDSSVETNATASLISEM) (removed in mature form). Asparagine 361 is a glycosylation site (N-linked (GlcNAc...) asparagine).

This sequence belongs to the glycosyl hydrolase 17 family. As to expression, is expressed primarily in epidermal cell of healthy plant, and following induction by ethylene, accumulates in mesophyll cells.

It localises to the vacuole. It carries out the reaction Hydrolysis of (1-&gt;3)-beta-D-glucosidic linkages in (1-&gt;3)-beta-D-glucans.. Implicated in the defense of plants against pathogens. The chain is Glucan endo-1,3-beta-glucosidase, basic vacuolar isoform GLB from Nicotiana tabacum (Common tobacco).